A 182-amino-acid polypeptide reads, in one-letter code: Large ribosomal subunit protein uL6 (182 aa).

This sequence belongs to the universal ribosomal protein uL6 family. As to quaternary structure, part of the 50S ribosomal subunit.

Functionally, this protein binds to the 23S rRNA, and is important in its secondary structure. It is located near the subunit interface in the base of the L7/L12 stalk, and near the tRNA binding site of the peptidyltransferase center. This chain is Large ribosomal subunit protein uL6, found in Dehalococcoides mccartyi (strain CBDB1).